Consider the following 591-residue polypeptide: Metalloendopeptidase OPG085 (591 aa).

His41 is a Zn(2+) binding site. Glu44 is a catalytic residue. Zn(2+)-binding residues include His45 and Glu112.

Belongs to the peptidase M44 family. The cofactor is Zn(2+). Post-translationally, undergoes proteolytic processing during the course of infection. May be cleaved into 46 kDa and 22 kDa products (Potential).

It is found in the virion. Probably involved in maturation of some viral proteins by processing them preferentially at Ala-Gly-|-Ser/Thr/Lys motifs. Does not seem to be responsible for the cleavage of major core proteins. The polypeptide is Metalloendopeptidase OPG085 (OPG085) (Variola virus (isolate Human/India/Ind3/1967) (VARV)).